The primary structure comprises 277 residues: F420-dependent methylenetetrahydromethanopterin dehydrogenase (277 aa).

The protein belongs to the MTD family.

The enzyme catalyses 5,10-methylenetetrahydromethanopterin + oxidized coenzyme F420-(gamma-L-Glu)(n) + 2 H(+) = 5,10-methenyl-5,6,7,8-tetrahydromethanopterin + reduced coenzyme F420-(gamma-L-Glu)(n). It functions in the pathway one-carbon metabolism; methanogenesis from CO(2); 5,10-methylene-5,6,7,8-tetrahydromethanopterin from 5,10-methenyl-5,6,7,8-tetrahydromethanopterin (coenzyme F420 route): step 1/1. In terms of biological role, catalyzes the reversible reduction of methenyl-H(4)MPT(+) to methylene-H(4)MPT. The sequence is that of F420-dependent methylenetetrahydromethanopterin dehydrogenase from Methanococcus maripaludis (strain C7 / ATCC BAA-1331).